We begin with the raw amino-acid sequence, 480 residues long: Cobyric acid synthase (480 aa).

The region spanning 246-434 is the GATase cobBQ-type domain; sequence KILIAVPILP…VHGLFSELAQ (189 aa). The active-site Nucleophile is cysteine 328. Residue histidine 426 is part of the active site.

This sequence belongs to the CobB/CobQ family. CobQ subfamily.

It functions in the pathway cofactor biosynthesis; adenosylcobalamin biosynthesis. Its function is as follows. Catalyzes amidations at positions B, D, E, and G on adenosylcobyrinic A,C-diamide. NH(2) groups are provided by glutamine, and one molecule of ATP is hydrogenolyzed for each amidation. The protein is Cobyric acid synthase of Methylocella silvestris (strain DSM 15510 / CIP 108128 / LMG 27833 / NCIMB 13906 / BL2).